The sequence spans 304 residues: Non-specific ribonucleoside hydrolase RihC (304 aa).

Residue His233 is part of the active site.

It belongs to the IUNH family. RihC subfamily.

In terms of biological role, hydrolyzes both purine and pyrimidine ribonucleosides with a broad-substrate specificity. The polypeptide is Non-specific ribonucleoside hydrolase RihC (Shigella dysenteriae serotype 1 (strain Sd197)).